Here is a 475-residue protein sequence, read N- to C-terminus: Zinc-regulated GTPase metalloprotein activator 1 (475 aa).

Glycine 50–threonine 57 contributes to the GTP binding site. Cysteine 116, cysteine 118, and cysteine 119 together coordinate Zn(2+). Positions cysteine 116 to cysteine 119 match the CXCC motif motif. Residues cysteine 119–glutamate 123 and asparagine 229–aspartate 232 each bind GTP. Positions isoleucine 302–leucine 420 constitute a CobW C-terminal domain. Residues isoleucine 440–lysine 467 adopt a coiled-coil conformation. Positions glutamate 445–tyrosine 460 are enriched in acidic residues. The interval glutamate 445–lysine 475 is disordered. The segment covering lysine 461–lysine 475 has biased composition (basic and acidic residues).

It belongs to the SIMIBI class G3E GTPase family. ZNG1 subfamily.

It catalyses the reaction GTP + H2O = GDP + phosphate + H(+). In terms of biological role, zinc chaperone that directly transfers zinc cofactor to target metalloproteins, thereby activating them. Zinc is transferred from the CXCC motif in the GTPase domain to the zinc binding site in target proteins in a process requiring GTP hydrolysis. The protein is Zinc-regulated GTPase metalloprotein activator 1 of Dictyostelium discoideum (Social amoeba).